A 301-amino-acid chain; its full sequence is Probable alpha-L-glutamate ligase (301 aa).

Residues 104 to 287 form the ATP-grasp domain; that stretch reads LQLLSRRGIG…VAGIIIEHLE (184 aa). ATP contacts are provided by residues Lys-141, 178–179, Asp-187, and 211–213; these read EY and RSN. Asp-248, Glu-260, and Asn-262 together coordinate Mg(2+). The Mn(2+) site is built by Asp-248, Glu-260, and Asn-262.

The protein belongs to the RimK family. Mg(2+) serves as cofactor. Requires Mn(2+) as cofactor.

The chain is Probable alpha-L-glutamate ligase from Pseudomonas fluorescens (strain Pf0-1).